A 488-amino-acid chain; its full sequence is 3-octaprenyl-4-hydroxybenzoate carboxy-lyase (488 aa).

Asn-172 provides a ligand contact to Mn(2+). Prenylated FMN contacts are provided by residues 175 to 177, 189 to 191, and 194 to 195; these read IYR, RWL, and RG. Residue Glu-238 coordinates Mn(2+). The active-site Proton donor is the Asp-287.

It belongs to the UbiD family. In terms of assembly, homohexamer. The cofactor is prenylated FMN. It depends on Mn(2+) as a cofactor.

Its subcellular location is the cell membrane. It catalyses the reaction a 4-hydroxy-3-(all-trans-polyprenyl)benzoate + H(+) = a 2-(all-trans-polyprenyl)phenol + CO2. It participates in cofactor biosynthesis; ubiquinone biosynthesis. Catalyzes the decarboxylation of 3-octaprenyl-4-hydroxy benzoate to 2-octaprenylphenol, an intermediate step in ubiquinone biosynthesis. The chain is 3-octaprenyl-4-hydroxybenzoate carboxy-lyase from Pseudomonas putida (strain W619).